The following is a 310-amino-acid chain: Probable manganese-dependent inorganic pyrophosphatase (310 aa).

His9, Asp13, Asp15, Asp76, His98, and Asp150 together coordinate Mn(2+).

Belongs to the PPase class C family. It depends on Mn(2+) as a cofactor.

It localises to the cytoplasm. It carries out the reaction diphosphate + H2O = 2 phosphate + H(+). This chain is Probable manganese-dependent inorganic pyrophosphatase, found in Streptococcus thermophilus (strain CNRZ 1066).